We begin with the raw amino-acid sequence, 278 residues long: MNNILSEEVLNVTDFTTSRQLTLWKREDLQSPQLDDVAEEVPVALVYNGISHVVMMASPKDLTHFAMGFSLSEGIIDSPREIYGMDVVPSCNGLEVQIDLSSRRFMGLKARRRALAGRTGCGVCGVEQLNDIGKPVQPLPFSQTFNLGNLDRALKHLNDFQPTGKLTGCTHAAAWVMPSGELAGGHEDVGRHVALDKLLGRRATEGEEWRQGAALVSSRASYEMVQKSAMCGVEILFAVSAATTLAVDVAERCNLTLVGFCKPGRATIYTHPQRLIAD.

Catalysis depends on Cys-121, which acts as the Cysteine persulfide intermediate. Residue 260-265 (FCKPGR) coordinates Mo-bis(molybdopterin guanine dinucleotide).

The protein belongs to the FdhD family.

It is found in the cytoplasm. Its function is as follows. Required for formate dehydrogenase (FDH) activity. Acts as a sulfur carrier protein that transfers sulfur from IscS to the molybdenum cofactor prior to its insertion into FDH. This Salmonella agona (strain SL483) protein is Sulfur carrier protein FdhD.